Consider the following 1077-residue polypeptide: ATP-dependent DNA helicase MPH1 (1077 aa).

The region spanning 99–266 is the Helicase ATP-binding domain; the sequence is IVHRALFENV…EVVDNLQISK (168 aa). Residue 112–119 coordinates ATP; sequence IPTGMGKT. The DEAH box signature appears at 214 to 217; that stretch reads DEAH. Positions 511–660 constitute a Helicase C-terminal domain; sequence KKVDRIRRLE…SLNYKVTDRI (150 aa). Disordered stretches follow at residues 536-556 and 831-859; these read EKLA…ISGM and TLSS…PKRQ. Residues 831–841 are compositionally biased toward polar residues; that stretch reads TLSSDNKSTPD.

This sequence belongs to the DEAD box helicase family. DEAH subfamily. FANCM sub-subfamily. As to quaternary structure, interacts with the MHF histone-fold complex to form the FANCM-MHF complex.

It localises to the nucleus. The catalysed reaction is ATP + H2O = ADP + phosphate + H(+). In terms of biological role, ATP-dependent DNA helicase involved in DNA damage repair by homologous recombination and in genome maintenance. Capable of unwinding D-loops. Plays a role in limiting crossover recombinants during mitotic DNA double-strand break (DSB) repair. Component of a FANCM-MHF complex which promotes gene conversion at blocked replication forks, probably by reversal of the stalled fork. In Eremothecium gossypii (strain ATCC 10895 / CBS 109.51 / FGSC 9923 / NRRL Y-1056) (Yeast), this protein is ATP-dependent DNA helicase MPH1.